The primary structure comprises 122 residues: Acidic phospholipase A2 BlatPLA2 (122 aa).

Intrachain disulfides connect C26–C115, C28–C44, C43–C95, C49–C122, C50–C88, C57–C81, and C75–C86. Ca(2+) is bound by residues Y27, G29, and G31. Residue H47 is part of the active site. D48 is a Ca(2+) binding site. D89 is an active-site residue.

This sequence belongs to the phospholipase A2 family. Group II subfamily. D49 sub-subfamily. As to quaternary structure, monomer. It depends on Ca(2+) as a cofactor. Expressed by the venom gland.

The protein resides in the secreted. It catalyses the reaction a 1,2-diacyl-sn-glycero-3-phosphocholine + H2O = a 1-acyl-sn-glycero-3-phosphocholine + a fatty acid + H(+). Functionally, acidic phospholipase A2 (PLA2) that only causes a mild edema, when subcutaneously injected in the mice foot. PLA2 catalyzes the calcium-dependent hydrolysis of the 2-acyl groups in 3-sn-phosphoglycerides. The protein is Acidic phospholipase A2 BlatPLA2 of Bothriechis lateralis (Side-striped palm pitviper).